Reading from the N-terminus, the 165-residue chain is Endoribonuclease YbeY (165 aa).

Positions 130, 134, and 140 each coordinate Zn(2+).

Belongs to the endoribonuclease YbeY family. The cofactor is Zn(2+).

It is found in the cytoplasm. Functionally, single strand-specific metallo-endoribonuclease involved in late-stage 70S ribosome quality control and in maturation of the 3' terminus of the 16S rRNA. The polypeptide is Endoribonuclease YbeY (Streptococcus pyogenes serotype M1).